Here is an 86-residue protein sequence, read N- to C-terminus: Toxin Aam2 (86 aa).

The N-terminal stretch at 1 to 20 is a signal peptide; that stretch reads MNYLITISLALLLMTGVASG. The LCN-type CS-alpha/beta domain maps to 22-84; the sequence is RDGYIADAGN…VPIKVPGKCN (63 aa). 4 cysteine pairs are disulfide-bonded: Cys32/Cys83, Cys36/Cys56, Cys42/Cys66, and Cys46/Cys68. Residue Asn84 is modified to Asparagine amide.

The protein belongs to the long (4 C-C) scorpion toxin superfamily. Sodium channel inhibitor family. Alpha subfamily. In terms of tissue distribution, expressed by the venom gland.

It is found in the secreted. Alpha toxins bind voltage-independently at site-3 of sodium channels (Nav) and inhibit the inactivation of the activated channels, thereby blocking neuronal transmission. The chain is Toxin Aam2 from Androctonus amoreuxi (African fattail scorpion).